A 372-amino-acid polypeptide reads, in one-letter code: Alginate lyase (372 aa).

An N-terminal signal peptide occupies residues 1–22 (MKTRLALPCLLGSLLLSSAVHA). Substrate is bound by residues 61–62 (SK), 134–135 (HT), and Tyr252.

This sequence belongs to the polysaccharide lyase 5 family.

Its subcellular location is the periplasm. The catalysed reaction is Eliminative cleavage of alginate to give oligosaccharides with 4-deoxy-alpha-L-erythro-hex-4-enuronosyl groups at their non-reducing ends and beta-D-mannuronate at their reducing end.. Its activity is regulated as follows. Monovalent cations such as potassium and sodium enhance activity, as well as a combined action of these cations with magnesium. However, other cations like calcium, cobalt, manganese and zinc, or the presence of EDTA, do not affect the enzymatic activity. Its function is as follows. Catalyzes the depolymerization of alginate by cleaving the beta-1,4 glycosidic bond between two adjacent sugar residues via a beta-elimination mechanism. Degrades deacetylated polymannuronate alginate more efficiently than non-deacetylated polyM. Is able to degrade its own alginate, but at a lower efficiency than that produced from M.pyriferia and P.aeruginosa. May serve to degrade mislocalized alginate that is trapped in the periplasmic space. The chain is Alginate lyase from Azotobacter chroococcum mcd 1.